The primary structure comprises 218 residues: Small ribosomal subunit protein uS3 (218 aa).

In terms of domain architecture, KH type-2 spans 38-106 (VREYINKRLQ…RVHINIVEIK (69 aa)).

Belongs to the universal ribosomal protein uS3 family. Part of the 30S ribosomal subunit. Forms a tight complex with proteins S10 and S14.

In terms of biological role, binds the lower part of the 30S subunit head. Binds mRNA in the 70S ribosome, positioning it for translation. The chain is Small ribosomal subunit protein uS3 from Geobacillus thermodenitrificans (strain NG80-2).